A 285-amino-acid polypeptide reads, in one-letter code: Putative phosphatase MG125 (285 aa).

The active-site Nucleophile is aspartate 8. Aspartate 8 is a Mg(2+) binding site. Leucine 9 contacts phosphate. A Mg(2+)-binding site is contributed by aspartate 10. Residues 44–45 and lysine 205 contribute to the phosphate site; that span reads TG. Positions 228 and 229 each coordinate Mg(2+). Residue asparagine 231 participates in phosphate binding.

It belongs to the HAD-like hydrolase superfamily. Cof family. Mg(2+) serves as cofactor.

This Mycoplasma genitalium (strain ATCC 33530 / DSM 19775 / NCTC 10195 / G37) (Mycoplasmoides genitalium) protein is Putative phosphatase MG125.